The following is a 483-amino-acid chain: MLTLDTLNVMLAVSEEGLIEEMIIALLASPQLAVFFEKFPRLKAAITDDVPRWREALRSRLKDARVPPELTEEVMCYQQSQLLSTPQFIVQLPQILDLLHRLNSPWAEQARQLVDANSTITSALHTLFLQRWRLSLIVQATTLNQQLLEEEREQLLSEVQERMTLSGQLEPILADNNTAAGRLWDMSAGQLKRGDYQLIVKYGEFLNEQPELKRLAEQLGRSREAKSIPRNDAQMETFRTMVREPATVPEQVDGLQQSDDILRLLPPELATLGITELEYEFYRRLVEKQLLTYRLHGESWREKVIERPVVHKDYDEQPRGPFIVCVDTSGSMGGFNEQCAKAFCLALMRIALAENRRCYIMLFSTEIVRYELSGPQGIEQAIRFLSQQFRGGTDLASCFRAIMERLQSREWFDADAVVISDFIAQRLPDDVTSKVKELQRVHQHRFHAVAMSAHGKPGIMRIFDHIWRFDTGMRSRLLRRWRR.

Belongs to the ViaA family. As to quaternary structure, homodimer. Interacts with RavA.

Its subcellular location is the cytoplasm. Component of the RavA-ViaA chaperone complex, which may act on the membrane to optimize the function of some of the respiratory chains. ViaA stimulates the ATPase activity of RavA. The protein is Regulatory protein ViaA of Shigella sonnei (strain Ss046).